A 200-amino-acid polypeptide reads, in one-letter code: Synaptobrevin homolog YKT6 (200 aa).

Positions 7-129 (GVFRSGGEKA…LKMKQLDTYI (123 aa)) constitute a Longin domain. The 61-residue stretch at 140 to 200 (AIMKVQQELD…KKSNSCCIIM (61 aa)) folds into the v-SNARE coiled-coil homology domain. Thr-158 is subject to Phosphothreonine. Cys-196 carries the S-palmitoyl cysteine lipid modification. Residue Cys-197 is modified to Cysteine methyl ester. Cys-197 carries the S-farnesyl cysteine lipid modification. A propeptide spans 198–200 (IIM) (removed in mature form).

The protein belongs to the synaptobrevin family.

It localises to the cell membrane. The sequence is that of Synaptobrevin homolog YKT6 (YKT6) from Saccharomyces cerevisiae (strain ATCC 204508 / S288c) (Baker's yeast).